The chain runs to 302 residues: Putative F-box protein At1g32420 (302 aa).

The segment covering 1 to 10 (MKRGNEENNH) has biased composition (basic and acidic residues). Residues 1 to 27 (MKRGNEENNHKTSSSSSTQRLSRRKIS) form a disordered region. The F-box domain occupies 31–78 (KSGNVNIPLDLTVEILKKLPAKSLLRFQCVSKQWLSIISSRRDFIDSI).

The chain is Putative F-box protein At1g32420 from Arabidopsis thaliana (Mouse-ear cress).